A 1025-amino-acid chain; its full sequence is Multidrug resistance protein MdtC (1025 aa).

The next 12 helical transmembrane spans lie at 3–23, 333–353, 360–380, 387–407, 431–451, 463–483, 528–548, 853–873, 875–895, 897–917, 953–973, and 984–1004; these read FFAL…AITL, EVEQ…FLFL, IIPA…MYLC, LSLM…IVVL, VGFT…PLLL, FAVT…TLTP, LVGV…ISIP, VILI…LYES, VHPL…LLAL, LFNA…IGIV, PIMM…LSGG, and ITIV…TPVV.

This sequence belongs to the resistance-nodulation-cell division (RND) (TC 2.A.6) family. MdtC subfamily. As to quaternary structure, part of a tripartite efflux system composed of MdtA, MdtB and MdtC. MdtC forms a heteromultimer with MdtB.

The protein localises to the cell inner membrane. In terms of biological role, the MdtABC tripartite complex confers resistance against novobiocin and deoxycholate. The protein is Multidrug resistance protein MdtC of Escherichia coli (strain UTI89 / UPEC).